Reading from the N-terminus, the 601-residue chain is Protein FAM13C (601 aa).

Disordered stretches follow at residues 82-134 and 192-238; these read SMGN…PQSS and DGQV…EDLQ. The segment covering 98–111 has biased composition (basic and acidic residues); it reads ESGRNHGESQETEH. Serine 130 is modified (phosphoserine). A compositionally biased stretch (low complexity) spans 200 to 217; it reads DPAPASTQSAPADSADPA. Serine 258 is subject to Phosphoserine. Disordered regions lie at residues 268-304, 327-352, and 366-485; these read QRFNLDPESAPSPPSSQQFMMPRSSSRCGSGDGKEPQ, FEQEKKYRPSHGDKTSNPEVLKWMND, and KLSE…DPVS. Residues 282 to 294 show a composition bias toward low complexity; the sequence is SSQQFMMPRSSSR. Positions 327–342 are enriched in basic and acidic residues; sequence FEQEKKYRPSHGDKTS. Serine 405 and serine 406 each carry phosphoserine. Positions 415–446 are enriched in basic and acidic residues; the sequence is VPEKREQTPPQDDGKGTKQDKNLIKPLYDRCR. A compositionally biased stretch (acidic residues) spans 462 to 471; that stretch reads QEEEDSDEDC.

It belongs to the FAM13 family.

In Mus musculus (Mouse), this protein is Protein FAM13C (Fam13c).